The sequence spans 401 residues: Argininosuccinate synthase (401 aa).

Residue 8-16 participates in ATP binding; it reads AYSGGLDTS. Tyr-86 contributes to the L-citrulline binding site. ATP is bound at residue Gly-116. Residues Thr-118, Asn-122, and Asp-123 each coordinate L-aspartate. An L-citrulline-binding site is contributed by Asn-122. L-citrulline is bound by residues Arg-126, Ser-174, Glu-258, and Tyr-270.

It belongs to the argininosuccinate synthase family. Type 1 subfamily. As to quaternary structure, homotetramer.

Its subcellular location is the cytoplasm. It carries out the reaction L-citrulline + L-aspartate + ATP = 2-(N(omega)-L-arginino)succinate + AMP + diphosphate + H(+). It functions in the pathway amino-acid biosynthesis; L-arginine biosynthesis; L-arginine from L-ornithine and carbamoyl phosphate: step 2/3. In Acidothermus cellulolyticus (strain ATCC 43068 / DSM 8971 / 11B), this protein is Argininosuccinate synthase.